A 290-amino-acid chain; its full sequence is MPELPEVEVTRRGLLPHVVGRRIAAVTVRHRGLRWPVDPGLEACLAHRLVRRIERRGKYLLLECISADAAQPPGWLLVHLGMTGTLRVLPEAPPPGMHDHFDLLLDAGPAPGMLADTIVLRFRDPRRFGAILWTTLPEAELASHPLLSTLGIEPFDPAFDGAWLHRHTRGRSAAIKTVLLSGAIVVGVGNIYASESLFRAGIRPTTAAGRLSRARCDRLAQAVRDTLAQAIERGGSTLRDFVGSDGASGYFQLDCFVYDRAGLPCRVCATPVRQIVQGQRSTFYCPKCQH.

Residue P2 is the Schiff-base intermediate with DNA of the active site. E3 (proton donor) is an active-site residue. The Proton donor; for beta-elimination activity role is filled by K58. Residues H98, R126, and R171 each coordinate DNA. Residues 256–290 (FVYDRAGLPCRVCATPVRQIVQGQRSTFYCPKCQH) form an FPG-type zinc finger. The Proton donor; for delta-elimination activity role is filled by R280.

Belongs to the FPG family. Monomer. Zn(2+) is required as a cofactor.

It catalyses the reaction Hydrolysis of DNA containing ring-opened 7-methylguanine residues, releasing 2,6-diamino-4-hydroxy-5-(N-methyl)formamidopyrimidine.. The catalysed reaction is 2'-deoxyribonucleotide-(2'-deoxyribose 5'-phosphate)-2'-deoxyribonucleotide-DNA = a 3'-end 2'-deoxyribonucleotide-(2,3-dehydro-2,3-deoxyribose 5'-phosphate)-DNA + a 5'-end 5'-phospho-2'-deoxyribonucleoside-DNA + H(+). Involved in base excision repair of DNA damaged by oxidation or by mutagenic agents. Acts as a DNA glycosylase that recognizes and removes damaged bases. Has a preference for oxidized purines, such as 7,8-dihydro-8-oxoguanine (8-oxoG). Has AP (apurinic/apyrimidinic) lyase activity and introduces nicks in the DNA strand. Cleaves the DNA backbone by beta-delta elimination to generate a single-strand break at the site of the removed base with both 3'- and 5'-phosphates. In Cupriavidus taiwanensis (strain DSM 17343 / BCRC 17206 / CCUG 44338 / CIP 107171 / LMG 19424 / R1) (Ralstonia taiwanensis (strain LMG 19424)), this protein is Formamidopyrimidine-DNA glycosylase.